The chain runs to 109 residues: UPF0060 membrane protein ABO_1373 (109 aa).

A run of 4 helical transmembrane segments spans residues 1-21, 33-53, 63-83, and 87-107; these read MLAL…IVGC, PGWV…LLSL, AAYG…VEGV, and PWDF…MFAP.

Belongs to the UPF0060 family.

It is found in the cell inner membrane. The protein is UPF0060 membrane protein ABO_1373 of Alcanivorax borkumensis (strain ATCC 700651 / DSM 11573 / NCIMB 13689 / SK2).